Consider the following 88-residue polypeptide: Stannin (88 aa).

The Mitochondrial intermembrane portion of the chain corresponds to 1 to 10 (MSIMDHSPTT). The helical transmembrane segment at 11–31 (GVVTVIVILIAIAALGALILG) threads the bilayer. Over 32–88 (CWCYLRLQRISQSEDEESIVGDGETKEPFLLVQYSAKGPCVERKAKLMTPNGPEVHG) the chain is Cytoplasmic. Position 49 is a phosphoserine (serine 49).

It belongs to the stannin family. As to quaternary structure, monomer.

It is found in the mitochondrion outer membrane. Its function is as follows. Plays a role in the toxic effects of organotins. Plays a role in endosomal maturation. This Homo sapiens (Human) protein is Stannin (SNN).